A 333-amino-acid chain; its full sequence is Probable tRNA pseudouridine synthase B (333 aa).

Over residues 1 to 14 (MKCPSREVFSKFEE) the composition is skewed to basic and acidic residues. The segment at 1–27 (MKCPSREVFSKFEESTNPQWGKPPSQR) is disordered. The active-site Nucleophile is the Asp71. In terms of domain architecture, PUA spans 238–313 (LPKIWVRDSA…LVARTDRVVM (76 aa)).

This sequence belongs to the pseudouridine synthase TruB family. Type 2 subfamily.

It carries out the reaction uridine(55) in tRNA = pseudouridine(55) in tRNA. Its function is as follows. Could be responsible for synthesis of pseudouridine from uracil-55 in the psi GC loop of transfer RNAs. The chain is Probable tRNA pseudouridine synthase B from Pyrobaculum aerophilum (strain ATCC 51768 / DSM 7523 / JCM 9630 / CIP 104966 / NBRC 100827 / IM2).